The primary structure comprises 299 residues: YjeF N-terminal domain-containing protein 3 (299 aa).

The YjeF N-terminal domain occupies 74–287; it reads AAALERELLE…DVRRKFALRL (214 aa).

In terms of assembly, interacts with APOA1. Binds to HDL. Expressed in theca cells in ovary and in Leydig cells in testis (at protein level). Also expressed in brain and mammary gland.

Its function is as follows. May accelerate cholesterol efflux from endothelial cells to high-density lipoprotein (HDL) and thereby regulates angiogenesis. May orchestrate hematopoietic stem and progenitor cell emergence from the hemogenic endothelium, a type of specialized endothelium manifesting hematopoietic potential. YJEFN3-mediated cholesterol efflux activates endothelial SREBF2, the master transcription factor for cholesterol biosynthesis, which in turn transactivates NOTCH and promotes hematopoietic stem and progenitor cell emergence. May play a role in spermiogenesis and oogenesis. This Homo sapiens (Human) protein is YjeF N-terminal domain-containing protein 3 (YJEFN3).